The sequence spans 118 residues: MARVKRGVVARARHKKILKQAKGYYGARSRVYRVAFQAVIKAGQYAYRDRRQRKRQFRQLWIARINAAARQNGLSYSKFINGLKKASVEIDRKILADIAVFDKLAFSALVEKAKAALA.

It belongs to the bacterial ribosomal protein bL20 family.

Binds directly to 23S ribosomal RNA and is necessary for the in vitro assembly process of the 50S ribosomal subunit. It is not involved in the protein synthesizing functions of that subunit. The polypeptide is Large ribosomal subunit protein bL20 (Pectobacterium atrosepticum (strain SCRI 1043 / ATCC BAA-672) (Erwinia carotovora subsp. atroseptica)).